Consider the following 285-residue polypeptide: Inositol oxygenase (285 aa).

The segment at Met-1–Phe-28 is disordered. Residues Arg-15–Phe-28 are compositionally biased toward basic and acidic residues. Arg-29 is a binding site for substrate. A Phosphoserine modification is found at Ser-33. A substrate-binding site is contributed by Asp-85–Ser-87. The Fe cation site is built by His-98, His-123, and Asp-124. Residues Lys-127 and Gly-141–Asp-142 contribute to the substrate site. The Fe cation site is built by His-194, His-220, and Asp-253. His-220–Ser-221 is a binding site for substrate.

Belongs to the myo-inositol oxygenase family. It depends on Fe cation as a cofactor.

It localises to the cytoplasm. It catalyses the reaction myo-inositol + O2 = D-glucuronate + H2O + H(+). It participates in polyol metabolism; myo-inositol degradation into D-glucuronate; D-glucuronate from myo-inositol: step 1/1. The sequence is that of Inositol oxygenase (MIOX) from Bos taurus (Bovine).